The primary structure comprises 280 residues: MNENMIECKNVVYKYEKAEEESKVAVDNVNLDIKKGEFLVVLGHNGSGKSTLSKHMNALLLPSEGTVYVSGMDTKDESNIWKIRNNAGMVFQNPDNQLVATIVEEDVAFGPENLGIAPDEIRSRVDEALKRVNMYEYRRYAPHLLSGGQKQRIAIAGILAMRPECIIFDEPTAMLDPSGRKEVVNTIKELNERYGITIILITHYMEEAVEADRIVVMDKGKIVMEGTPREIFSNVPLMKNIGLDVPQMTELAYELQNSGVNIASDILTIDEMVNALCQLK.

Positions 6–244 constitute an ABC transporter domain; it reads IECKNVVYKY…VPLMKNIGLD (239 aa). Residue 43–50 participates in ATP binding; that stretch reads GHNGSGKS.

This sequence belongs to the ABC transporter superfamily. Energy-coupling factor EcfA family. Forms a stable energy-coupling factor (ECF) transporter complex composed of 2 membrane-embedded substrate-binding proteins (S component), 2 ATP-binding proteins (A component) and 2 transmembrane proteins (T component).

It localises to the cell membrane. ATP-binding (A) component of a common energy-coupling factor (ECF) ABC-transporter complex. Unlike classic ABC transporters this ECF transporter provides the energy necessary to transport a number of different substrates. The protein is Energy-coupling factor transporter ATP-binding protein EcfA1 of Clostridium novyi (strain NT).